The sequence spans 338 residues: Oxygen-dependent coproporphyrinogen-III oxidase (338 aa).

Residue serine 104 participates in substrate binding. Histidine 108 and histidine 118 together coordinate a divalent metal cation. Catalysis depends on histidine 118, which acts as the Proton donor. A substrate-binding site is contributed by 120-122 (NYR). A divalent metal cation is bound by residues histidine 152 and histidine 182. Positions 274–309 (YVEFNLVYDRGTIFGLQTNGRTESILMSLPPLVRWE) are important for dimerization.

It belongs to the aerobic coproporphyrinogen-III oxidase family. In terms of assembly, homodimer. The cofactor is a divalent metal cation.

It is found in the cytoplasm. The catalysed reaction is coproporphyrinogen III + O2 + 2 H(+) = protoporphyrinogen IX + 2 CO2 + 2 H2O. Its pathway is porphyrin-containing compound metabolism; protoporphyrin-IX biosynthesis; protoporphyrinogen-IX from coproporphyrinogen-III (O2 route): step 1/1. Involved in the heme and chlorophyll biosynthesis. Catalyzes the aerobic oxidative decarboxylation of propionate groups of rings A and B of coproporphyrinogen-III to yield the vinyl groups in protoporphyrinogen-IX. This Thermosynechococcus vestitus (strain NIES-2133 / IAM M-273 / BP-1) protein is Oxygen-dependent coproporphyrinogen-III oxidase.